Consider the following 119-residue polypeptide: MAWTPLLFLTLLLHCTGSLSQLVLTQSPSASASLGASVKLTCTLSSGHSSYAIAWHQQQPEKGPRYLMKLNSDGSHSKGDGIPDRFSGSSSGAERYLTISSLQSEDEADYYCQTWGTGI.

The first 20 residues, 1 to 20 (MAWTPLLFLTLLLHCTGSLS), serve as a signal peptide directing secretion. Residues 21–45 (QLVLTQSPSASASLGASVKLTCTLS) are framework-1. The region spanning 21 to 119 (QLVLTQSPSA…YYCQTWGTGI (99 aa)) is the Ig-like domain. The cysteines at positions 42 and 112 are disulfide-linked. The tract at residues 46-52 (SGHSSYA) is complementarity-determining-1. The segment at 53-69 (IAWHQQQPEKGPRYLMK) is framework-2. The tract at residues 70 to 76 (LNSDGSH) is complementarity-determining-2. The segment at 73–92 (DGSHSKGDGIPDRFSGSSSG) is disordered. Residues 77–112 (SKGDGIPDRFSGSSSGAERYLTISSLQSEDEADYYC) are framework-3. The tract at residues 113-119 (QTWGTGI) is complementarity-determining-3.

As to quaternary structure, immunoglobulins are composed of two identical heavy chains and two identical light chains; disulfide-linked.

The protein resides in the secreted. It is found in the cell membrane. Functionally, v region of the variable domain of immunoglobulin light chains that participates in the antigen recognition. Immunoglobulins, also known as antibodies, are membrane-bound or secreted glycoproteins produced by B lymphocytes. In the recognition phase of humoral immunity, the membrane-bound immunoglobulins serve as receptors which, upon binding of a specific antigen, trigger the clonal expansion and differentiation of B lymphocytes into immunoglobulins-secreting plasma cells. Secreted immunoglobulins mediate the effector phase of humoral immunity, which results in the elimination of bound antigens. The antigen binding site is formed by the variable domain of one heavy chain, together with that of its associated light chain. Thus, each immunoglobulin has two antigen binding sites with remarkable affinity for a particular antigen. The variable domains are assembled by a process called V-(D)-J rearrangement and can then be subjected to somatic hypermutations which, after exposure to antigen and selection, allow affinity maturation for a particular antigen. The polypeptide is Immunoglobulin lambda variable 4-69 (Homo sapiens (Human)).